Here is a 198-residue protein sequence, read N- to C-terminus: Syndecan-4 (198 aa).

The N-terminal stretch at 1–18 (MAPARLFALLLLFVGGVA) is a signal peptide. Residues 19-145 (ESIRETEVID…QGSNIFERTE (127 aa)) are Extracellular-facing. Residues Ser39, Ser61, and Ser63 are each glycosylated (O-linked (Xyl...) (glycosaminoglycan) serine). Ser95 carries O-linked (Xyl...) (chondroitin sulfate) serine glycosylation. The helical transmembrane segment at 146-170 (VLAALIVGGIVGILFAVFLILLLMY) threads the bilayer. Residues 171 to 198 (RMKKKDEGSYDLGKKPIYKKAPTNEFYA) lie on the Cytoplasmic side of the membrane.

It belongs to the syndecan proteoglycan family. Homodimer. Interacts with CDCP1 and SDCBP. Interacts (via its cytoplasmic domain) with GIPC (via its PDZ domain). Interacts (via its cytoplasmic domain) with NUDT16L1. Interacts with DNM2; this interaction is markedly enhanced at focal ahesion site upon induction of focal adhesions and stress-fiber formation. In terms of processing, shedding is enhanced by a number of factors such as heparanase, thrombin or EGF. Also by stress and wound healing. PMA-mediated shedding is inhibited by TIMP3. Post-translationally, O-glycosylated; contains both chondroitin sulfate and heparan sulfate. Ser-39, Ser-61 and Ser-63 can all be modified by either chondroitin sulfate or heparan sulfate, and the protein exists in forms that contain only chondroitin sulfate, only heparan sulfate and both chondroitin sulfate and heparan sulfate.

The protein localises to the membrane. It is found in the secreted. Functionally, cell surface proteoglycan which regulates exosome biogenesis in concert with SDCBP and PDCD6IP. The polypeptide is Syndecan-4 (Pongo abelii (Sumatran orangutan)).